The chain runs to 171 residues: Ribosome maturation factor RimP (171 aa).

Belongs to the RimP family.

The protein localises to the cytoplasm. Functionally, required for maturation of 30S ribosomal subunits. In Anaeromyxobacter sp. (strain K), this protein is Ribosome maturation factor RimP.